The primary structure comprises 166 residues: Cofilin-2 (166 aa).

Alanine 2 carries the post-translational modification N-acetylalanine. Phosphoserine is present on serine 3. Positions 4-153 (GVTVNDEVIK…KDRSTLGEKL (150 aa)) constitute an ADF-H domain. Threonine 6 is subject to Phosphothreonine. The short motif at 30 to 34 (KKRKK) is the Nuclear localization signal element.

Belongs to the actin-binding proteins ADF family. In terms of assembly, interacts with CSRP3; possibly two molecules of CFL2 can interact with one molecule if CSRP3. In terms of processing, the phosphorylation of Ser-24 may prevent recognition of the nuclear localization signal. Predominantly expressed in skeletal muscle.

The protein resides in the nucleus matrix. It is found in the cytoplasm. Its subcellular location is the cytoskeleton. Controls reversibly actin polymerization and depolymerization in a pH-sensitive manner. It has the ability to bind G- and F-actin in a 1:1 ratio of cofilin to actin. It is the major component of intranuclear and cytoplasmic actin rods. Required for muscle maintenance. May play a role during the exchange of alpha-actin forms during the early postnatal remodeling of the sarcomere. In Mus musculus (Mouse), this protein is Cofilin-2 (Cfl2).